A 684-amino-acid chain; its full sequence is Glycine--tRNA ligase beta subunit (684 aa).

The protein belongs to the class-II aminoacyl-tRNA synthetase family. In terms of assembly, tetramer of two alpha and two beta subunits.

The protein resides in the cytoplasm. It catalyses the reaction tRNA(Gly) + glycine + ATP = glycyl-tRNA(Gly) + AMP + diphosphate. This Pseudomonas fluorescens (strain SBW25) protein is Glycine--tRNA ligase beta subunit.